Consider the following 621-residue polypeptide: Putative 5'-3' exonuclease R528 (621 aa).

This sequence belongs to the 5'-3' exonuclease family.

The protein localises to the virion. This Acanthamoeba polyphaga mimivirus (APMV) protein is Putative 5'-3' exonuclease R528.